The chain runs to 477 residues: Aspartyl/glutamyl-tRNA(Asn/Gln) amidotransferase subunit B (477 aa).

Belongs to the GatB/GatE family. GatB subfamily. As to quaternary structure, heterotrimer of A, B and C subunits.

The catalysed reaction is L-glutamyl-tRNA(Gln) + L-glutamine + ATP + H2O = L-glutaminyl-tRNA(Gln) + L-glutamate + ADP + phosphate + H(+). It catalyses the reaction L-aspartyl-tRNA(Asn) + L-glutamine + ATP + H2O = L-asparaginyl-tRNA(Asn) + L-glutamate + ADP + phosphate + 2 H(+). Functionally, allows the formation of correctly charged Asn-tRNA(Asn) or Gln-tRNA(Gln) through the transamidation of misacylated Asp-tRNA(Asn) or Glu-tRNA(Gln) in organisms which lack either or both of asparaginyl-tRNA or glutaminyl-tRNA synthetases. The reaction takes place in the presence of glutamine and ATP through an activated phospho-Asp-tRNA(Asn) or phospho-Glu-tRNA(Gln). In Lactococcus lactis subsp. cremoris (strain SK11), this protein is Aspartyl/glutamyl-tRNA(Asn/Gln) amidotransferase subunit B.